We begin with the raw amino-acid sequence, 373 residues long: Glutamate 5-kinase 2 (373 aa).

K11 contacts ATP. Substrate is bound by residues S51, D138, and N150. Residues 170–171 and 212–218 contribute to the ATP site; these read SD and TGGMKSK. One can recognise a PUA domain in the interval 279-355; the sequence is EGDIVVHNES…TNQETAASSQ (77 aa).

The protein belongs to the glutamate 5-kinase family.

It is found in the cytoplasm. The catalysed reaction is L-glutamate + ATP = L-glutamyl 5-phosphate + ADP. It functions in the pathway amino-acid biosynthesis; L-proline biosynthesis; L-glutamate 5-semialdehyde from L-glutamate: step 1/2. Its function is as follows. Catalyzes the transfer of a phosphate group to glutamate to form L-glutamate 5-phosphate. This Bacillus licheniformis (strain ATCC 14580 / DSM 13 / JCM 2505 / CCUG 7422 / NBRC 12200 / NCIMB 9375 / NCTC 10341 / NRRL NRS-1264 / Gibson 46) protein is Glutamate 5-kinase 2.